Here is a 185-residue protein sequence, read N- to C-terminus: Putative 3-methyladenine DNA glycosylase (185 aa).

It belongs to the DNA glycosylase MPG family.

This Rhizobium meliloti (strain 1021) (Ensifer meliloti) protein is Putative 3-methyladenine DNA glycosylase.